The following is a 138-amino-acid chain: Small ribosomal subunit protein uS11c (138 aa).

Residues 1-23 are disordered; that stretch reads MAKPILRIGSRKNTRSGSRKNVR. Positions 9–23 are enriched in basic residues; the sequence is GSRKNTRSGSRKNVR.

Belongs to the universal ribosomal protein uS11 family. In terms of assembly, part of the 30S ribosomal subunit.

It is found in the plastid. It localises to the chloroplast. The polypeptide is Small ribosomal subunit protein uS11c (Crucihimalaya wallichii (Rock-cress)).